The primary structure comprises 400 residues: Argininosuccinate synthase (400 aa).

8 to 16 serves as a coordination point for ATP; the sequence is AYSGGLDTS. Residue tyrosine 87 coordinates L-citrulline. Glycine 117 is a binding site for ATP. L-aspartate is bound by residues threonine 119, asparagine 123, and aspartate 124. Position 123 (asparagine 123) interacts with L-citrulline. Arginine 127, serine 175, glutamate 260, and tyrosine 272 together coordinate L-citrulline.

Belongs to the argininosuccinate synthase family. Type 1 subfamily. As to quaternary structure, homotetramer.

The protein localises to the cytoplasm. The enzyme catalyses L-citrulline + L-aspartate + ATP = 2-(N(omega)-L-arginino)succinate + AMP + diphosphate + H(+). The protein operates within amino-acid biosynthesis; L-arginine biosynthesis; L-arginine from L-ornithine and carbamoyl phosphate: step 2/3. This chain is Argininosuccinate synthase, found in Mycolicibacterium vanbaalenii (strain DSM 7251 / JCM 13017 / BCRC 16820 / KCTC 9966 / NRRL B-24157 / PYR-1) (Mycobacterium vanbaalenii).